The primary structure comprises 200 residues: Holliday junction branch migration complex subunit RuvA (200 aa).

The tract at residues 1–64 (MIGRIVGTLI…EDSHTLYGFI (64 aa)) is domain I. The segment at 65 to 143 (DKNERALFRV…QAAKTDLFSA (79 aa)) is domain II. Residues 144 to 149 (PAVLRQ) are flexible linker. The interval 150–200 (VQADPRQEAEAALISLGYKPQEAAKAIAGVPVDAANSEDVIKAALKGMLRK) is domain III.

It belongs to the RuvA family. As to quaternary structure, homotetramer. Forms an RuvA(8)-RuvB(12)-Holliday junction (HJ) complex. HJ DNA is sandwiched between 2 RuvA tetramers; dsDNA enters through RuvA and exits via RuvB. An RuvB hexamer assembles on each DNA strand where it exits the tetramer. Each RuvB hexamer is contacted by two RuvA subunits (via domain III) on 2 adjacent RuvB subunits; this complex drives branch migration. In the full resolvosome a probable DNA-RuvA(4)-RuvB(12)-RuvC(2) complex forms which resolves the HJ.

The protein resides in the cytoplasm. In terms of biological role, the RuvA-RuvB-RuvC complex processes Holliday junction (HJ) DNA during genetic recombination and DNA repair, while the RuvA-RuvB complex plays an important role in the rescue of blocked DNA replication forks via replication fork reversal (RFR). RuvA specifically binds to HJ cruciform DNA, conferring on it an open structure. The RuvB hexamer acts as an ATP-dependent pump, pulling dsDNA into and through the RuvAB complex. HJ branch migration allows RuvC to scan DNA until it finds its consensus sequence, where it cleaves and resolves the cruciform DNA. This Marinomonas sp. (strain MWYL1) protein is Holliday junction branch migration complex subunit RuvA.